We begin with the raw amino-acid sequence, 332 residues long: Biotin synthase (332 aa).

The Radical SAM core domain maps to 46–275; the sequence is SDIQRASLLS…RARVRLSAGR (230 aa). The [4Fe-4S] cluster site is built by cysteine 61, cysteine 65, and cysteine 68. The [2Fe-2S] cluster site is built by cysteine 106, cysteine 138, cysteine 198, and arginine 270.

Belongs to the radical SAM superfamily. Biotin synthase family. In terms of assembly, homodimer. The cofactor is [4Fe-4S] cluster. It depends on [2Fe-2S] cluster as a cofactor.

The catalysed reaction is (4R,5S)-dethiobiotin + (sulfur carrier)-SH + 2 reduced [2Fe-2S]-[ferredoxin] + 2 S-adenosyl-L-methionine = (sulfur carrier)-H + biotin + 2 5'-deoxyadenosine + 2 L-methionine + 2 oxidized [2Fe-2S]-[ferredoxin]. It participates in cofactor biosynthesis; biotin biosynthesis; biotin from 7,8-diaminononanoate: step 2/2. Its function is as follows. Catalyzes the conversion of dethiobiotin (DTB) to biotin by the insertion of a sulfur atom into dethiobiotin via a radical-based mechanism. The polypeptide is Biotin synthase (Methylobacterium sp. (strain 4-46)).